The sequence spans 326 residues: Lipoyl synthase (326 aa).

C56, C61, C67, C82, C86, C89, and S298 together coordinate [4Fe-4S] cluster. Residues 68 to 287 form the Radical SAM core domain; it reads WEDREATFLI…KDEADAIGYS (220 aa).

The protein belongs to the radical SAM superfamily. Lipoyl synthase family. [4Fe-4S] cluster serves as cofactor.

It is found in the cytoplasm. It catalyses the reaction [[Fe-S] cluster scaffold protein carrying a second [4Fe-4S](2+) cluster] + N(6)-octanoyl-L-lysyl-[protein] + 2 oxidized [2Fe-2S]-[ferredoxin] + 2 S-adenosyl-L-methionine + 4 H(+) = [[Fe-S] cluster scaffold protein] + N(6)-[(R)-dihydrolipoyl]-L-lysyl-[protein] + 4 Fe(3+) + 2 hydrogen sulfide + 2 5'-deoxyadenosine + 2 L-methionine + 2 reduced [2Fe-2S]-[ferredoxin]. It participates in protein modification; protein lipoylation via endogenous pathway; protein N(6)-(lipoyl)lysine from octanoyl-[acyl-carrier-protein]: step 2/2. Catalyzes the radical-mediated insertion of two sulfur atoms into the C-6 and C-8 positions of the octanoyl moiety bound to the lipoyl domains of lipoate-dependent enzymes, thereby converting the octanoylated domains into lipoylated derivatives. The protein is Lipoyl synthase of Streptomyces griseus subsp. griseus (strain JCM 4626 / CBS 651.72 / NBRC 13350 / KCC S-0626 / ISP 5235).